The chain runs to 463 residues: Probable ECA polymerase (463 aa).

11 consecutive transmembrane segments (helical) span residues 6–26, 39–59, 65–85, 112–132, 154–174, 180–200, 201–221, 222–242, 340–360, 377–397, and 408–428; these read FGGL…LTWM, FSLL…VLVF, VVPV…YAIY, ANLT…IFFL, GVAL…VYFL, AWLM…VIVG, GTRA…IVRG, WITL…MFWL, LVVM…GLVI, YKAA…IVLT, and VVFF…LYWL.

Belongs to the WzyE family. In terms of assembly, probably part of a complex composed of WzxE, WzyE and WzzE.

The protein localises to the cell inner membrane. It functions in the pathway bacterial outer membrane biogenesis; enterobacterial common antigen biosynthesis. Functionally, probably involved in the polymerization of enterobacterial common antigen (ECA) trisaccharide repeat units. This Pectobacterium carotovorum subsp. carotovorum (strain PC1) protein is Probable ECA polymerase.